Here is a 506-residue protein sequence, read N- to C-terminus: Anaerobic nitric oxide reductase transcription regulator NorR (506 aa).

Position 57 is a 4-aspartylphosphate (aspartate 57). Positions 187–416 (MIGLSPAMTQ…LEHAIHRAVV (230 aa)) constitute a Sigma-54 factor interaction domain. Residues 215–222 (GETGTGKE) and 278–287 (ADNGTLFLDE) contribute to the ATP site. The segment at residues 481-500 (WAASARALETDVANLHRLAK) is a DNA-binding region (H-T-H motif).

It functions in the pathway nitrogen metabolism; nitric oxide reduction. In terms of biological role, required for the expression of anaerobic nitric oxide (NO) reductase, acts as a transcriptional activator for at least the norVW operon. Activation also requires sigma-54. This chain is Anaerobic nitric oxide reductase transcription regulator NorR, found in Salmonella dublin (strain CT_02021853).